The primary structure comprises 208 residues: EF-hand protein 5 variant 1 (208 aa).

Residues 1 to 34 (MQARGTVKVQGDAKVDGKMSTGQHSHHQHLNSTQ) form a disordered region. 4 EF-hand domains span residues 64–98 (MAEG…HLTE), 99–134 (EEFH…EVDD), 135–170 (TMAD…LGER), and 171–206 (STPE…SRVN). Ca(2+) contacts are provided by Glu118, Asp123, Asp148, Thr152, and Tyr154.

The protein is EF-hand protein 5 variant 1 of Trypanosoma cruzi.